Here is a 155-residue protein sequence, read N- to C-terminus: MKQIELQRHMEEVSLQFFQKEFRHRAVFNARLRTTGGRYLLKSHDIEMNPKYLENFGLEYFFGIMKHELCHYHLHLEKKGYQHRDKDFRELLKKVNAPRFCATIPREITMHEYTCENCGKSFLKQRRFNVNRYRCGSCGGKLKQLGSKKIYTENR.

The 138-residue stretch at 7-144 (QRHMEEVSLQ…CGSCGGKLKQ (138 aa)) folds into the SprT-like domain. Residue His67 participates in Zn(2+) binding. Residue Glu68 is part of the active site. A Zn(2+)-binding site is contributed by His71.

The protein belongs to the SprT family. It depends on Zn(2+) as a cofactor.

Its subcellular location is the cytoplasm. This is Protein SprT-like from Listeria welshimeri serovar 6b (strain ATCC 35897 / DSM 20650 / CCUG 15529 / CIP 8149 / NCTC 11857 / SLCC 5334 / V8).